The chain runs to 434 residues: Lecithin-cholesterol acyltransferase-like 1 (434 aa).

The active-site Acyl-ester intermediate is the serine 191. Catalysis depends on charge relay system residues aspartate 354 and histidine 386.

This sequence belongs to the AB hydrolase superfamily. Lipase family.

The polypeptide is Lecithin-cholesterol acyltransferase-like 1 (Oryza sativa subsp. japonica (Rice)).